A 313-amino-acid chain; its full sequence is ADP-L-glycero-D-manno-heptose-6-epimerase (313 aa).

Residues 10–11 (MI), 31–32 (DN), Lys38, Arg53, 75–79 (EGACS), and Asn92 contribute to the NADP(+) site. Tyr139 (proton acceptor) is an active-site residue. Lys143 provides a ligand contact to NADP(+). Asn174 contacts substrate. Residues Val175 and Lys183 each coordinate NADP(+). Residue Lys183 is the Proton acceptor of the active site. Residues Ser185, His192, 206-209 (FAGS), Arg214, and Tyr277 contribute to the substrate site.

This sequence belongs to the NAD(P)-dependent epimerase/dehydratase family. HldD subfamily. In terms of assembly, homopentamer. NADP(+) is required as a cofactor.

It carries out the reaction ADP-D-glycero-beta-D-manno-heptose = ADP-L-glycero-beta-D-manno-heptose. It participates in nucleotide-sugar biosynthesis; ADP-L-glycero-beta-D-manno-heptose biosynthesis; ADP-L-glycero-beta-D-manno-heptose from D-glycero-beta-D-manno-heptose 7-phosphate: step 4/4. It functions in the pathway bacterial outer membrane biogenesis; LPS core biosynthesis. Functionally, catalyzes the interconversion between ADP-D-glycero-beta-D-manno-heptose and ADP-L-glycero-beta-D-manno-heptose via an epimerization at carbon 6 of the heptose. The chain is ADP-L-glycero-D-manno-heptose-6-epimerase from Vibrio vulnificus (strain YJ016).